Reading from the N-terminus, the 322-residue chain is Adenine deaminase (322 aa).

3 residues coordinate Zn(2+): histidine 11, histidine 13, and histidine 189. Glutamate 192 serves as the catalytic Proton donor. Aspartate 270 is a binding site for Zn(2+). Aspartate 271 provides a ligand contact to substrate.

It belongs to the metallo-dependent hydrolases superfamily. Adenosine and AMP deaminases family. Adenine deaminase type 2 subfamily. Zn(2+) is required as a cofactor.

The catalysed reaction is adenine + H2O + H(+) = hypoxanthine + NH4(+). Its function is as follows. Catalyzes the hydrolytic deamination of adenine to hypoxanthine. Plays an important role in the purine salvage pathway and in nitrogen catabolism. The sequence is that of Adenine deaminase from Rhizobium rhizogenes (strain K84 / ATCC BAA-868) (Agrobacterium radiobacter).